A 965-amino-acid chain; its full sequence is Serine/threonine-protein kinase tousled-like 1 (965 aa).

6 disordered regions span residues 1–22 (MSML…GGER), 35–72 (PQNK…ATGD), 95–120 (QNSS…TRSS), 172–292 (NHQQ…KQER), 320–402 (QNQG…QSGR), and 538–576 (RKPL…DDAI). Positions 10-21 (VAGGGSSSGGGE) are enriched in gly residues. The span at 42-52 (TVQSSGSSSNH) shows a compositional bias: polar residues. Residues 172–231 (NHQQQMQQMHYHQQQQQYQQQQAQHHQMYAPQIQQQQQQPQQQSQQQSAQQPQQSSAALQ) are compositionally biased toward low complexity. Polar residues-rich tracts occupy residues 233–244 (VNESSNLSSAGS) and 320–341 (QNQG…SYDS). Residues 342–355 (QQQQPQMNQHEMQN) are compositionally biased toward low complexity. Over residues 365–381 (LGVNNRGTPTPTQQQHY) the composition is skewed to polar residues. Residues 382–401 (SSDSNSNSNQSPPGQGNQSG) are compositionally biased toward low complexity. A compositionally biased stretch (polar residues) spans 552–572 (AVNSQNDSNGMQPSTSSNTNG). Residue S634 is modified to Phosphoserine. Positions 651 to 928 (YLMLNLLGKG…VFELAKHELF (278 aa)) constitute a Protein kinase domain. Residues 657–665 (LGKGGFSEV) and K680 contribute to the ATP site. D781 functions as the Proton acceptor in the catalytic mechanism.

Belongs to the protein kinase superfamily. Ser/Thr protein kinase family. In terms of assembly, interacts with air-2. In terms of processing, autophosphorylates in vitro. Phosphorylation on Ser-634 by air-2 enhances catalytic activity.

It is found in the nucleus. It catalyses the reaction L-seryl-[protein] + ATP = O-phospho-L-seryl-[protein] + ADP + H(+). The catalysed reaction is L-threonyl-[protein] + ATP = O-phospho-L-threonyl-[protein] + ADP + H(+). Functionally, essential for appropriate transcription during embryonic development. May act during transcription elongation to activate the RNA polymerase II large subunit (ama-1) by phosphorylating the Ser-2 residues of the C-terminal domain 7-residue repeats. Does not phosphorylate histone H3. The chain is Serine/threonine-protein kinase tousled-like 1 (tlk-1) from Caenorhabditis elegans.